The sequence spans 150 residues: 3-hydroxyacyl-[acyl-carrier-protein] dehydratase FabZ (150 aa).

The active site involves histidine 52.

Belongs to the thioester dehydratase family. FabZ subfamily.

It is found in the cytoplasm. The catalysed reaction is a (3R)-hydroxyacyl-[ACP] = a (2E)-enoyl-[ACP] + H2O. Functionally, involved in unsaturated fatty acids biosynthesis. Catalyzes the dehydration of short chain beta-hydroxyacyl-ACPs and long chain saturated and unsaturated beta-hydroxyacyl-ACPs. The chain is 3-hydroxyacyl-[acyl-carrier-protein] dehydratase FabZ from Albidiferax ferrireducens (strain ATCC BAA-621 / DSM 15236 / T118) (Rhodoferax ferrireducens).